Here is a 30-residue protein sequence, read N- to C-terminus: Bacteriocin curvaticin (30 aa).

C9 and C14 are oxidised to a cystine.

The protein localises to the secreted. Has antibacterial activity against the Gram-positive bacterium L.monocytogenes. The chain is Bacteriocin curvaticin from Latilactobacillus curvatus (Lactobacillus curvatus).